A 338-amino-acid chain; its full sequence is Ketol-acid reductoisomerase (NADP(+)) (338 aa).

The KARI N-terminal Rossmann domain maps to 1 to 181 (MKVFYDNDAD…GGTRAGVIET (181 aa)). NADP(+) contacts are provided by residues 24 to 27 (YGSQ), Arg-47, Ser-50, Ser-52, and 82 to 85 (DEGQ). His-107 is a catalytic residue. Gly-133 serves as a coordination point for NADP(+). One can recognise a KARI C-terminal knotted domain in the interval 182–327 (SFREETETDL…SKLRSMMTWI (146 aa)). The Mg(2+) site is built by Asp-190, Glu-194, Glu-226, and Glu-230. Ser-251 contributes to the substrate binding site.

It belongs to the ketol-acid reductoisomerase family. Requires Mg(2+) as cofactor.

It carries out the reaction (2R)-2,3-dihydroxy-3-methylbutanoate + NADP(+) = (2S)-2-acetolactate + NADPH + H(+). The catalysed reaction is (2R,3R)-2,3-dihydroxy-3-methylpentanoate + NADP(+) = (S)-2-ethyl-2-hydroxy-3-oxobutanoate + NADPH + H(+). The protein operates within amino-acid biosynthesis; L-isoleucine biosynthesis; L-isoleucine from 2-oxobutanoate: step 2/4. Its pathway is amino-acid biosynthesis; L-valine biosynthesis; L-valine from pyruvate: step 2/4. In terms of biological role, involved in the biosynthesis of branched-chain amino acids (BCAA). Catalyzes an alkyl-migration followed by a ketol-acid reduction of (S)-2-acetolactate (S2AL) to yield (R)-2,3-dihydroxy-isovalerate. In the isomerase reaction, S2AL is rearranged via a Mg-dependent methyl migration to produce 3-hydroxy-3-methyl-2-ketobutyrate (HMKB). In the reductase reaction, this 2-ketoacid undergoes a metal-dependent reduction by NADPH to yield (R)-2,3-dihydroxy-isovalerate. The sequence is that of Ketol-acid reductoisomerase (NADP(+)) from Acidithiobacillus ferrooxidans (strain ATCC 23270 / DSM 14882 / CIP 104768 / NCIMB 8455) (Ferrobacillus ferrooxidans (strain ATCC 23270)).